A 198-amino-acid chain; its full sequence is Glutamyl-tRNA(Gln) amidotransferase subunit C, mitochondrial (198 aa).

It belongs to the GatC family. Subunit of the heterotrimeric GatCAB amidotransferase (AdT) complex, composed of A, B and C subunits.

The protein resides in the mitochondrion. It carries out the reaction L-glutamyl-tRNA(Gln) + L-glutamine + ATP + H2O = L-glutaminyl-tRNA(Gln) + L-glutamate + ADP + phosphate + H(+). Allows the formation of correctly charged Gln-tRNA(Gln) through the transamidation of misacylated Glu-tRNA(Gln) in the mitochondria. The reaction takes place in the presence of glutamine and ATP through an activated gamma-phospho-Glu-tRNA(Gln). The chain is Glutamyl-tRNA(Gln) amidotransferase subunit C, mitochondrial from Caenorhabditis remanei (Caenorhabditis vulgaris).